A 284-amino-acid chain; its full sequence is Halorhodopsin (284 aa).

The Extracellular segment spans residues 1 to 30; it reads MIETAAADILAGGMVPLEMTQTQIFEAVQS. Residues 31–56 form a helical membrane-spanning segment; the sequence is DTLLASSLWINIALAGLSILLFVYMG. Over 57–62 the chain is Cytoplasmic; it reads RNVEDP. The chain crosses the membrane as a helical span at residues 63-86; the sequence is RAQLIFVATLMVPLVSISSYTGLV. Residues 87–110 are Extracellular-facing; the sequence is SGLTVSFLEMPAGHALAGQEVLTP. Residues 111–132 form a helical membrane-spanning segment; it reads WGRYLTWALSTPMILIAVGLLA. At 133 to 135 the chain is on the cytoplasmic side; it reads GSN. A helical transmembrane segment spans residues 136 to 159; it reads TTKLFTAVVADIGMCVTGLAAALT. Over 160-162 the chain is Extracellular; the sequence is TSS. Residues 163–185 traverse the membrane as a helical segment; it reads YLLRWVWYAISCAFFVVVLYILL. At 186–197 the chain is on the cytoplasmic side; sequence AEWAEDAEIAGT. The helical transmembrane segment at 198-221 threads the bilayer; sequence ADIFNTLKVLTVVLWLGYPIFWAL. Over 222–230 the chain is Extracellular; it reads GAEGLAVLD. Residues 231–259 traverse the membrane as a helical segment; that stretch reads VAITSWAYSGMDIVAKYLFAFLLLRWVVN. Lys246 is modified (N6-(retinylidene)lysine). At 260–284 the chain is on the cytoplasmic side; the sequence is NERTVADVASGLGSGSRGGAAPADD.

The protein belongs to the archaeal/bacterial/fungal opsin family.

It is found in the cell membrane. Its function is as follows. Light-driven chloride pump. This Halobacterium sp. (strain SG1) protein is Halorhodopsin (hop).